Here is a 487-residue protein sequence, read N- to C-terminus: ATP synthase subunit beta, plastid (487 aa).

169–176 (GGAGVGKT) lines the ATP pocket.

It belongs to the ATPase alpha/beta chains family. As to quaternary structure, F-type ATPases have 2 components, CF(1) - the catalytic core - and CF(0) - the membrane proton channel. CF(1) has five subunits: alpha(3), beta(3), gamma(1), delta(1), epsilon(1). CF(0) has four main subunits: a(1), b(1), b'(1) and c(9-12).

The protein resides in the plastid membrane. It carries out the reaction ATP + H2O + 4 H(+)(in) = ADP + phosphate + 5 H(+)(out). In terms of biological role, produces ATP from ADP in the presence of a proton gradient across the membrane. The catalytic sites are hosted primarily by the beta subunits. The sequence is that of ATP synthase subunit beta, plastid (atpB) from Cuscuta pentagona (Five-angled dodder).